Consider the following 706-residue polypeptide: MYNSIYGSPFPKINPKVRYKTALERAGFDTKPRNPFSSQRNASTGSLQASVKSPPITRQRNVSAAPSVPVTMKSAYTASSKSAYSSVKGESDIYPPPVLENSERRSVTPPKNSNFTSSRPSDISRSISRPSERASQEDPFRFERDLDRQAEQYAASRHTCKSPANKEFQAADNFPFNFEQEDAGNTEREQDLSPIERSFMMLTQNDTASVVNSMNQTDNRGVLDQKLGKEQQKEESSIEYESEGQQEDENDIESLNFEPDPKLQMNLENEPLQDDFPEAKQEEKNTEPKIPEINVTRESNTPSLTMNALDSKIYPDDNFSGLESSKEQKSPGVSSSSTKVEDLSLDGLNEKRLSITSSENVETPYTATNLQVEQLIAQLDDVSLSRNAKLDMNGNCLNAVDRKASRFKKSSAYLSGYPSMDIPVTQQTSIVQNSNTNLSRQTILVDKGDVDEDAPSESTTNGGTPIFYKFKQSNVEYSNNEGMGSQETFRTKLPTIEALQLQHKRNITDLREEIDNSKSNDSHVLPNGGTTRYSSDADYKETEPIEFKYPPGEGPCRACGLEVTGKRMFSKKENELSGQWHRECFKCIECGIKFNKHVPCYILGDEPYCQKHYHEENHSICKVCSNFIEGECLENDKVERFHVDCLNCFLCKTAITNDYYIFNGEIPLCGNHDMEALLKEGIDNATSSNDKNNTLSKRRTRLINFN.

Disordered stretches follow at residues 24 to 192 (ERAG…EQDL), 222 to 258 (VLDQ…LNFE), 279 to 341 (AKQE…TKVE), and 514 to 537 (IDNS…SSDA). The span at 35 to 64 (PFSSQRNASTGSLQASVKSPPITRQRNVSA) shows a compositional bias: polar residues. Residues Ser-43 and Ser-63 each carry the phosphoserine modification. Composition is skewed to low complexity over residues 73-86 (KSAY…AYSS) and 117-129 (SSRP…SISR). 2 stretches are compositionally biased toward basic and acidic residues: residues 130 to 150 (PSER…DRQA) and 222 to 236 (VLDQ…KEES). Residues 237 to 252 (SIEYESEGQQEDENDI) are compositionally biased toward acidic residues. Residues 279 to 290 (AKQEEKNTEPKI) are compositionally biased toward basic and acidic residues. Positions 296-308 (TRESNTPSLTMNA) are enriched in polar residues. LIM zinc-binding domains are found at residues 556 to 612 (CRAC…CQKH) and 621 to 672 (CKVC…CGNH).

This chain is Paxillin-like protein 1 (PXL1), found in Saccharomyces cerevisiae (strain ATCC 204508 / S288c) (Baker's yeast).